The sequence spans 183 residues: Bifunctional protein PyrR (183 aa).

A PRPP-binding motif is present at residues 98-110 (VVLVDDVLYTGRT).

This sequence belongs to the purine/pyrimidine phosphoribosyltransferase family. PyrR subfamily.

It catalyses the reaction UMP + diphosphate = 5-phospho-alpha-D-ribose 1-diphosphate + uracil. Regulates the transcription of the pyrimidine nucleotide (pyr) operon in response to exogenous pyrimidines. Functionally, also displays a weak uracil phosphoribosyltransferase activity which is not physiologically significant. In Roseiflexus sp. (strain RS-1), this protein is Bifunctional protein PyrR.